The following is a 215-amino-acid chain: N-(5'-phosphoribosyl)anthranilate isomerase (215 aa).

This sequence belongs to the TrpF family.

The enzyme catalyses N-(5-phospho-beta-D-ribosyl)anthranilate = 1-(2-carboxyphenylamino)-1-deoxy-D-ribulose 5-phosphate. It participates in amino-acid biosynthesis; L-tryptophan biosynthesis; L-tryptophan from chorismate: step 3/5. The polypeptide is N-(5'-phosphoribosyl)anthranilate isomerase (Rhizobium meliloti (strain 1021) (Ensifer meliloti)).